We begin with the raw amino-acid sequence, 157 residues long: dCTP deaminase (157 aa).

DCTP contacts are provided by residues 79 to 84 (RSSLAR), Asp-95, Gln-124, and Tyr-138.

This sequence belongs to the dCTP deaminase family. In terms of assembly, homotrimer.

The catalysed reaction is dCTP + H2O + H(+) = dUTP + NH4(+). It functions in the pathway pyrimidine metabolism; dUMP biosynthesis; dUMP from dCTP (dUTP route): step 1/2. In terms of biological role, catalyzes the deamination of dCTP to dUTP. This Thermococcus gammatolerans (strain DSM 15229 / JCM 11827 / EJ3) protein is dCTP deaminase.